We begin with the raw amino-acid sequence, 110 residues long: Light-harvesting complex-like protein OHP1, chloroplastic (110 aa).

The transit peptide at 1 to 41 (MSSSPLSSSLFHPLSTLSTHCHGRRQNLCFNRKQQPFVVRA) directs the protein to the chloroplast. Residues 42–74 (AKLPEGVIVPKAQPKSQPAFLGFTQTAEIWNSR) lie on the Stromal side of the membrane. The chain crosses the membrane as a helical span at residues 75 to 95 (ACMIGLIGTFIVELILNKGIL). At 96–110 (ELIGVEIGKGLDLPL) the chain is on the lumenal side.

It belongs to the ELIP/psbS family. As to quaternary structure, may bind chlorophyll and form dimers in the thylakoid membrane. Component of a high molecular weight complex containing OHP1, OHP2 and HCF244, and PSII core proteins D1/D2, HCF136 and HCF173. Interacts with HCF244. Forms a trimeric complex with OHP2 and HCF244 that mutually stabilizes each subunit. As to expression, mostly expressed in cotyledons and shoot apices.

The protein resides in the plastid. The protein localises to the chloroplast thylakoid membrane. May play a photoprotective role in the thylakoid membrane in response to light stress. Involved in photosystems I (PSI) and II (PSII) core proteins function. Forms a trimeric complex with OHP2 and HCF244 that is required to promote PSII core subunit assembly. The trimeric complex forms a transient PSII reaction center-like complex with PsbA, PsbD, PsbE, PsbF and PsbI subunits in thylakoids for early assembly of PSII as well as PSII repair. The trimeric complex is required for the recruitment of ribosomes to the psbA mRNA during PSII biogenesis and repair. Forms a heterodimer with OHP1 that binds chlorophylls and carotenoids, and that may function in the delivery of pigments to the PsbA subunit of PSII. This Arabidopsis thaliana (Mouse-ear cress) protein is Light-harvesting complex-like protein OHP1, chloroplastic.